An 80-amino-acid polypeptide reads, in one-letter code: Saposin-B-Val (80 aa).

One can recognise a Saposin B-type domain in the interval Gly-1–Val-80. 3 disulfide bridges follow: Cys-4/Cys-77, Cys-7/Cys-71, and Cys-36/Cys-47. An N-linked (GlcNAc...) (complex) asparagine glycan is attached at Asn-21.

As to quaternary structure, saposin-B is a homodimer. Interacts with GRN; facilitates lysosomal delivery of progranulin from the extracellular space and the biosynthetic pathway. In terms of processing, the one residue extended Saposin-B-Val is only found in a minority of the chains.

Its function is as follows. Saposin-B stimulates the hydrolysis of galacto-cerebroside sulfate by arylsulfatase A (EC 3.1.6.8), GM1 gangliosides by beta-galactosidase (EC 3.2.1.23) and globotriaosylceramide by alpha-galactosidase A (EC 3.2.1.22). Saposin-B forms a solubilizing complex with the substrates of the sphingolipid hydrolases. This is Saposin-B-Val (PSAP) from Sus scrofa (Pig).